Reading from the N-terminus, the 27-residue chain is uncharacterized protein (27 aa).

The protein resides in the plastid. Its subcellular location is the chloroplast. This is an uncharacterized protein from Anthoceros angustus (Hornwort).